Here is a 258-residue protein sequence, read N- to C-terminus: Peptidase inhibitor 15 (258 aa).

A signal peptide spans 1–21 (MTIIAAISCVFLFSILCETSA). A propeptide spanning residues 22–60 (LVLPNSTDLLLSNNNFTDIETALAAHLDSAKIPKARRKR) is cleaved from the precursor. N-linked (GlcNAc...) asparagine glycans are attached at residues N26, N36, and N124. One can recognise an SCP domain in the interval 71–211 (LDYHNQVRGK…RRAVYLVCNY (141 aa)).

The protein belongs to the CRISP family.

The protein resides in the secreted. Its function is as follows. Serine protease inhibitor which displays weak inhibitory activity against trypsin. May play a role in facial patterning during embryonic development. The chain is Peptidase inhibitor 15 (PI15) from Gallus gallus (Chicken).